The sequence spans 627 residues: tRNA uridine 5-carboxymethylaminomethyl modification enzyme MnmG (627 aa).

Residues 13-18 (GGGHAG), valine 125, and serine 180 contribute to the FAD site. 274–288 (GPRYCPSIEDKVVRF) provides a ligand contact to NAD(+). Glutamine 371 contributes to the FAD binding site.

It belongs to the MnmG family. In terms of assembly, homodimer. Heterotetramer of two MnmE and two MnmG subunits. It depends on FAD as a cofactor.

The protein localises to the cytoplasm. Functionally, NAD-binding protein involved in the addition of a carboxymethylaminomethyl (cmnm) group at the wobble position (U34) of certain tRNAs, forming tRNA-cmnm(5)s(2)U34. The chain is tRNA uridine 5-carboxymethylaminomethyl modification enzyme MnmG from Francisella tularensis subsp. novicida (strain U112).